Consider the following 362-residue polypeptide: Probable S-adenosylmethionine-dependent methyltransferase At5g37970 (362 aa).

S-adenosyl-L-homocysteine is bound by residues Y19, C66, N71, D107, S136, and F137. 3 residues coordinate Mg(2+): N175, E261, and F263.

This sequence belongs to the methyltransferase superfamily. Type-7 methyltransferase family. As to quaternary structure, homodimer. Requires Mg(2+) as cofactor.

This Arabidopsis thaliana (Mouse-ear cress) protein is Probable S-adenosylmethionine-dependent methyltransferase At5g37970.